A 465-amino-acid chain; its full sequence is MMAETLTPRQIVEKLDQFIVGQKEAKKAVAIALRNRYRRSLLDEKLRDEVMPKNILMIGPTGVGKTEIARRLAKLVGAPFIKVEATKFTEVGYVGRDVESMVRDLVETSVRLVKERKMNEVKDRAEQQANKRLVELLVPGKPKQTIKNPLELLFGGQGAQADNSYSHEDEQVEQKRRQVAWQLANGQLENEMVTIEIEEQTPLWFDFLQGAGIEQMGMNMQDALSSLMPKRRKKRRLKVSEARKVLINEEAQKLIDMDEVTQEAVRLAEQSGIIFIDEIDKIARSGAVSGSADVSREGVQRDILPIVEGSTVMTKYGPVKTDHILFIAAGAFHMAKPSDLIPELQGRFPIRVELAKLSVDDFVRILVEPNNALIKQYQALLATEGISLEFSDDAIRKIAEVAFEVNQTTDNIGARRLHTILEKLLEDLLFEAPDIGIDKVVITPQYVEQKLGSIVKNKDLSEFIL.

Residues V20, 62–67 (GVGKTE), D277, E343, and R415 contribute to the ATP site.

Belongs to the ClpX chaperone family. HslU subfamily. As to quaternary structure, a double ring-shaped homohexamer of HslV is capped on each side by a ring-shaped HslU homohexamer. The assembly of the HslU/HslV complex is dependent on binding of ATP.

It localises to the cytoplasm. Its function is as follows. ATPase subunit of a proteasome-like degradation complex; this subunit has chaperone activity. The binding of ATP and its subsequent hydrolysis by HslU are essential for unfolding of protein substrates subsequently hydrolyzed by HslV. HslU recognizes the N-terminal part of its protein substrates and unfolds these before they are guided to HslV for hydrolysis. The protein is ATP-dependent protease ATPase subunit HslU of Geobacillus kaustophilus (strain HTA426).